We begin with the raw amino-acid sequence, 152 residues long: SKP1-like protein 11 (152 aa).

The interaction with the F-box domain of F-box proteins stretch occupies residues 94–152; it reads ILAANYLNIKSLLDLTCQTVADMIKGKTPEEIRSTFNIENDFTPEEEEAVRKENQWAFE.

Belongs to the SKP1 family. Part of a SCF (SKP1-cullin-F-box) protein ligase complex. Interacts with ADO3/FKF1, COI1/FBL2, EBF1/FBL6, PP2A13, PP2B10, UFO, SKIP2, SKIP15, SKIP16, SKIP32, CPR1/CPR30, At1g55000, At1g67340, At1g78100, At3g04660, At3g16740, At3g61590, At4g38940 and At5g49610. In terms of tissue distribution, expressed in young seedlings, cotyledons, roots, leaves, floral stems, inflorescences, pollen, and siliques, with a slightly higher level in inflorescence than in other tissues.

It is found in the nucleus. It participates in protein modification; protein ubiquitination. Functionally, involved in ubiquitination and subsequent proteasomal degradation of target proteins. Together with CUL1, RBX1 and a F-box protein, it forms a SCF E3 ubiquitin ligase complex. The functional specificity of this complex depends on the type of F-box protein. In the SCF complex, it serves as an adapter that links the F-box protein to CUL1. Plays a role during early flowers reproductive development. This chain is SKP1-like protein 11 (ASK11), found in Arabidopsis thaliana (Mouse-ear cress).